A 380-amino-acid chain; its full sequence is Peroxisomal membrane protein PEX13 (380 aa).

Residues 1–30 are disordered; the sequence is MSDSSAPDLPSKPSSLNAGQSSSLQTTNTG. At 1 to 230 the chain is on the lumenal side; that stretch reads MSDSSAPDLP…NKNTNKLSLK (230 aa). Residues 12–30 show a composition bias toward polar residues; that stretch reads KPSSLNAGQSSSLQTTNTG. The helical transmembrane segment at 231-251 threads the bilayer; sequence PLLLFLAAVVGFPYLLKKLIA. The Cytoplasmic segment spans residues 252 to 380; that stretch reads HLAETSQMNG…DSTEFQKMKT (129 aa). The SH3 domain occupies 277 to 344; that stretch reads TKLEFARALY…PYNYVEIIER (68 aa).

Belongs to the peroxin-13 family. Interacts (via SH3 domain) with PEX14 (via SH3-binding motif); forming the PEX13-PEX14 docking complex.

The protein resides in the peroxisome membrane. Functionally, component of the PEX13-PEX14 docking complex, a translocon channel that specifically mediates the import of peroxisomal cargo proteins bound to PEX5 receptor. The PEX13-PEX14 docking complex forms a large import pore which can be opened to a diameter of about 9 nm. Mechanistically, PEX5 receptor along with cargo proteins associates with the PEX14 subunit of the PEX13-PEX14 docking complex in the cytosol, leading to the insertion of the receptor into the organelle membrane with the concomitant translocation of the cargo into the peroxisome matrix. The protein is Peroxisomal membrane protein PEX13 (PEX13) of Komagataella pastoris (Yeast).